A 575-amino-acid polypeptide reads, in one-letter code: Phosphoenolpyruvate-protein phosphotransferase (575 aa).

Residue His189 is the Tele-phosphohistidine intermediate of the active site. Positions 296 and 332 each coordinate phosphoenolpyruvate. Positions 431 and 455 each coordinate Mg(2+). Phosphoenolpyruvate contacts are provided by residues 454–455 (ND) and Arg465. Cys502 acts as the Proton donor in catalysis.

The protein belongs to the PEP-utilizing enzyme family. Homodimer. Mg(2+) is required as a cofactor.

The protein resides in the cytoplasm. It catalyses the reaction L-histidyl-[protein] + phosphoenolpyruvate = N(pros)-phospho-L-histidyl-[protein] + pyruvate. General (non sugar-specific) component of the phosphoenolpyruvate-dependent sugar phosphotransferase system (sugar PTS). This major carbohydrate active-transport system catalyzes the phosphorylation of incoming sugar substrates concomitantly with their translocation across the cell membrane. Enzyme I transfers the phosphoryl group from phosphoenolpyruvate (PEP) to the phosphoryl carrier protein (HPr). This chain is Phosphoenolpyruvate-protein phosphotransferase (ptsI), found in Salmonella typhimurium (strain LT2 / SGSC1412 / ATCC 700720).